A 95-amino-acid polypeptide reads, in one-letter code: DNA-directed RNA polymerase subunit Rpo11 (95 aa).

This sequence belongs to the archaeal Rpo11/eukaryotic RPB11/RPC19 RNA polymerase subunit family. Part of the RNA polymerase complex.

It is found in the cytoplasm. It catalyses the reaction RNA(n) + a ribonucleoside 5'-triphosphate = RNA(n+1) + diphosphate. DNA-dependent RNA polymerase (RNAP) catalyzes the transcription of DNA into RNA using the four ribonucleoside triphosphates as substrates. The polypeptide is DNA-directed RNA polymerase subunit Rpo11 (Thermococcus sibiricus (strain DSM 12597 / MM 739)).